The following is a 125-amino-acid chain: Prepro-urotensin II-alpha (125 aa).

An N-terminal signal peptide occupies residues 1–21; the sequence is MMCNLLLSFSVLLLSCTHLVA. Residues 109-111 constitute a propeptide that is removed on maturation; the sequence is QFR. An intrachain disulfide couples Cys119 to Cys124.

This sequence belongs to the urotensin-2 family.

The protein localises to the secreted. Urotensin is found in the teleost caudal neurosecretory system. It has a suggested role in osmoregulation and as a corticotropin-releasing factor. The non-hormonal portion of this precursor may be a urotensin binding protein, urophysin. The polypeptide is Prepro-urotensin II-alpha (Cyprinus carpio (Common carp)).